A 351-amino-acid polypeptide reads, in one-letter code: Protein RecA (351 aa).

73-80 provides a ligand contact to ATP; sequence GPESSGKT.

This sequence belongs to the RecA family.

The protein resides in the cytoplasm. In terms of biological role, can catalyze the hydrolysis of ATP in the presence of single-stranded DNA, the ATP-dependent uptake of single-stranded DNA by duplex DNA, and the ATP-dependent hybridization of homologous single-stranded DNAs. It interacts with LexA causing its activation and leading to its autocatalytic cleavage. This is Protein RecA from Oleidesulfovibrio alaskensis (strain ATCC BAA-1058 / DSM 17464 / G20) (Desulfovibrio alaskensis).